We begin with the raw amino-acid sequence, 391 residues long: UPF0328 protein ECU06_1650 (391 aa).

Belongs to the UPF0328 family.

The sequence is that of UPF0328 protein ECU06_1650 from Encephalitozoon cuniculi (strain GB-M1) (Microsporidian parasite).